The sequence spans 204 residues: UPF0637 protein Lm4b_01081 (204 aa).

Belongs to the UPF0637 family.

In Listeria monocytogenes serotype 4b (strain CLIP80459), this protein is UPF0637 protein Lm4b_01081.